Consider the following 347-residue polypeptide: Quinolinate synthase (347 aa).

Iminosuccinate-binding residues include H47 and S68. C113 serves as a coordination point for [4Fe-4S] cluster. Residues 139-141 (YAN) and S156 contribute to the iminosuccinate site. C200 lines the [4Fe-4S] cluster pocket. Residues 226 to 228 (HPE) and T243 contribute to the iminosuccinate site. C297 contributes to the [4Fe-4S] cluster binding site.

The protein belongs to the quinolinate synthase family. Type 1 subfamily. [4Fe-4S] cluster serves as cofactor.

It localises to the cytoplasm. It carries out the reaction iminosuccinate + dihydroxyacetone phosphate = quinolinate + phosphate + 2 H2O + H(+). It functions in the pathway cofactor biosynthesis; NAD(+) biosynthesis; quinolinate from iminoaspartate: step 1/1. Functionally, catalyzes the condensation of iminoaspartate with dihydroxyacetone phosphate to form quinolinate. This chain is Quinolinate synthase, found in Escherichia coli O45:K1 (strain S88 / ExPEC).